The chain runs to 158 residues: Putative metalloproteinase inhibitor tag-225 (158 aa).

An N-terminal signal peptide occupies residues 1 to 20 (MQNLSLSLVILSVLIAVTLA). Cys21 contributes to the Zn(2+) binding site. Residues 21-25 (CKCRE) form an involved in metalloproteinase-binding region. Intrachain disulfides connect Cys21–Cys96, Cys23–Cys123, and Cys33–Cys158. The 138-residue stretch at 21–158 (CKCREQSTKE…LQSQVKSIKC (138 aa)) folds into the NTR domain. N-linked (GlcNAc...) asparagine glycosylation occurs at Asn79. The segment at 93 to 94 (AP) is involved in metalloproteinase-binding.

It belongs to the protease inhibitor I35 (TIMP) family.

It localises to the secreted. Its function is as follows. Complexes with metalloproteinases and irreversibly inactivates them by binding to their catalytic zinc cofactor. This is Putative metalloproteinase inhibitor tag-225 (tag-225) from Caenorhabditis elegans.